The chain runs to 404 residues: Corticosteroid-binding globulin (404 aa).

Residues Met-1–Ala-22 form the signal peptide. N-linked (GlcNAc...) asparagine glycosylation is found at Asn-95, Asn-119, and Asn-175. Gln-253 provides a ligand contact to cortisol. Asn-259 carries an N-linked (GlcNAc...) asparagine glycan. Residue Gln-285 coordinates cortisol. N-linked (GlcNAc...) asparagine glycosylation is present at Asn-326. Trp-392 is a cortisol binding site.

Belongs to the serpin family. Glycosylation in position Asn-259 is needed for steroid binding.

The protein localises to the secreted. Its function is as follows. Major transport protein for glucocorticoids and progestins in the blood of almost all vertebrate species. In Bos taurus (Bovine), this protein is Corticosteroid-binding globulin (SERPINA6).